Reading from the N-terminus, the 130-residue chain is Transcription antitermination protein NusB (130 aa).

The protein belongs to the NusB family.

Functionally, involved in transcription antitermination. Required for transcription of ribosomal RNA (rRNA) genes. Binds specifically to the boxA antiterminator sequence of the ribosomal RNA (rrn) operons. This Bacillus velezensis (strain DSM 23117 / BGSC 10A6 / LMG 26770 / FZB42) (Bacillus amyloliquefaciens subsp. plantarum) protein is Transcription antitermination protein NusB.